The sequence spans 444 residues: N-succinylarginine dihydrolase (444 aa).

Residues 19-28 (SGLSVGNIAS), asparagine 110, and 137-138 (HR) contribute to the substrate site. Residue glutamate 174 is part of the active site. Arginine 214 is a substrate binding site. Residue histidine 250 is part of the active site. The substrate site is built by aspartate 252 and asparagine 362. Residue cysteine 368 is the Nucleophile of the active site.

The protein belongs to the succinylarginine dihydrolase family. As to quaternary structure, homodimer.

The catalysed reaction is N(2)-succinyl-L-arginine + 2 H2O + 2 H(+) = N(2)-succinyl-L-ornithine + 2 NH4(+) + CO2. The protein operates within amino-acid degradation; L-arginine degradation via AST pathway; L-glutamate and succinate from L-arginine: step 2/5. Catalyzes the hydrolysis of N(2)-succinylarginine into N(2)-succinylornithine, ammonia and CO(2). This chain is N-succinylarginine dihydrolase, found in Aliivibrio fischeri (strain ATCC 700601 / ES114) (Vibrio fischeri).